A 464-amino-acid chain; its full sequence is Juvenile hormone epoxide hydrolase 1 (464 aa).

Residues 7–27 (MLIFAAIAGIAVLYYQITKEL) form a helical membrane-spanning segment. Catalysis depends on Asp-224, which acts as the Nucleophile. The Proton donor role is filled by Tyr-370. The Proton acceptor role is filled by His-427.

Belongs to the peptidase S33 family. As to expression, developing oocytes, fat body and midgut epithelium of adults.

It localises to the microsome membrane. It is found in the endoplasmic reticulum membrane. It catalyses the reaction cis-stilbene oxide + H2O = (1R,2R)-hydrobenzoin. The enzyme catalyses 1-(4-methoxyphenyl)-N-methyl-N-[(3-methyloxetan-3-yl)methyl]methanamine + H2O = 2-{[(4-methoxybenzyl)(methyl)amino]methyl}-2-methylpropane-1,3-diol. In terms of biological role, catalyzes juvenile hormone hydrolysis. The chain is Juvenile hormone epoxide hydrolase 1 from Ctenocephalides felis (Cat flea).